The sequence spans 285 residues: Type II restriction enzyme Cfr10I (285 aa).

2 residues coordinate Mg(2+): Asp134 and Glu204.

Homodimer. The cofactor is Mg(2+).

It carries out the reaction Endonucleolytic cleavage of DNA to give specific double-stranded fragments with terminal 5'-phosphates.. Its function is as follows. An F and P subtype restriction enzyme that recognizes the double-stranded sequence 5'-RCCGGY-3' and cleaves after R-1. In Citrobacter freundii, this protein is Type II restriction enzyme Cfr10I (cfr10IR).